The following is a 180-amino-acid chain: Shikimate kinase (180 aa).

14–19 (GAGKST) provides a ligand contact to ATP. Ser-18 serves as a coordination point for Mg(2+). The substrate site is built by Asp-36, Arg-60, and Gly-82. Residue Arg-120 participates in ATP binding. Arg-140 is a substrate binding site. Gln-157 lines the ATP pocket.

It belongs to the shikimate kinase family. As to quaternary structure, monomer. It depends on Mg(2+) as a cofactor.

The protein resides in the cytoplasm. It carries out the reaction shikimate + ATP = 3-phosphoshikimate + ADP + H(+). The protein operates within metabolic intermediate biosynthesis; chorismate biosynthesis; chorismate from D-erythrose 4-phosphate and phosphoenolpyruvate: step 5/7. Functionally, catalyzes the specific phosphorylation of the 3-hydroxyl group of shikimic acid using ATP as a cosubstrate. The protein is Shikimate kinase of Haemophilus influenzae (strain PittGG).